The sequence spans 159 residues: 6,7-dimethyl-8-ribityllumazine synthase (159 aa).

5-amino-6-(D-ribitylamino)uracil contacts are provided by residues Phe23, 61-63 (SFE), and 85-87 (AVI). 90–91 (DT) is a binding site for (2S)-2-hydroxy-3-oxobutyl phosphate. The Proton donor role is filled by His93. Residue Phe118 participates in 5-amino-6-(D-ribitylamino)uracil binding. Residue Arg132 coordinates (2S)-2-hydroxy-3-oxobutyl phosphate.

It belongs to the DMRL synthase family.

The enzyme catalyses (2S)-2-hydroxy-3-oxobutyl phosphate + 5-amino-6-(D-ribitylamino)uracil = 6,7-dimethyl-8-(1-D-ribityl)lumazine + phosphate + 2 H2O + H(+). It functions in the pathway cofactor biosynthesis; riboflavin biosynthesis; riboflavin from 2-hydroxy-3-oxobutyl phosphate and 5-amino-6-(D-ribitylamino)uracil: step 1/2. Its function is as follows. Catalyzes the formation of 6,7-dimethyl-8-ribityllumazine by condensation of 5-amino-6-(D-ribitylamino)uracil with 3,4-dihydroxy-2-butanone 4-phosphate. This is the penultimate step in the biosynthesis of riboflavin. This Synechococcus sp. (strain RCC307) protein is 6,7-dimethyl-8-ribityllumazine synthase.